The primary structure comprises 248 residues: 1-(5-phosphoribosyl)-5-[(5-phosphoribosylamino)methylideneamino] imidazole-4-carboxamide isomerase (248 aa).

The active-site Proton acceptor is the aspartate 8. Aspartate 127 acts as the Proton donor in catalysis.

It belongs to the HisA/HisF family.

Its subcellular location is the cytoplasm. The enzyme catalyses 1-(5-phospho-beta-D-ribosyl)-5-[(5-phospho-beta-D-ribosylamino)methylideneamino]imidazole-4-carboxamide = 5-[(5-phospho-1-deoxy-D-ribulos-1-ylimino)methylamino]-1-(5-phospho-beta-D-ribosyl)imidazole-4-carboxamide. It participates in amino-acid biosynthesis; L-histidine biosynthesis; L-histidine from 5-phospho-alpha-D-ribose 1-diphosphate: step 4/9. This chain is 1-(5-phosphoribosyl)-5-[(5-phosphoribosylamino)methylideneamino] imidazole-4-carboxamide isomerase, found in Thermotoga neapolitana (strain ATCC 49049 / DSM 4359 / NBRC 107923 / NS-E).